The primary structure comprises 424 residues: 3-phosphoshikimate 1-carboxyvinyltransferase (424 aa).

3-phosphoshikimate contacts are provided by Lys21, Ser22, and Arg26. Lys21 provides a ligand contact to phosphoenolpyruvate. Phosphoenolpyruvate-binding residues include Gly92 and Arg120. 3-phosphoshikimate is bound by residues Ser163, Ser164, Gln165, Ser191, Asp306, and Lys333. Gln165 is a phosphoenolpyruvate binding site. The Proton acceptor role is filled by Asp306. Positions 337, 379, and 405 each coordinate phosphoenolpyruvate.

This sequence belongs to the EPSP synthase family. Monomer.

It is found in the cytoplasm. It carries out the reaction 3-phosphoshikimate + phosphoenolpyruvate = 5-O-(1-carboxyvinyl)-3-phosphoshikimate + phosphate. It functions in the pathway metabolic intermediate biosynthesis; chorismate biosynthesis; chorismate from D-erythrose 4-phosphate and phosphoenolpyruvate: step 6/7. Functionally, catalyzes the transfer of the enolpyruvyl moiety of phosphoenolpyruvate (PEP) to the 5-hydroxyl of shikimate-3-phosphate (S3P) to produce enolpyruvyl shikimate-3-phosphate and inorganic phosphate. This is 3-phosphoshikimate 1-carboxyvinyltransferase from Clostridium perfringens (strain SM101 / Type A).